The primary structure comprises 473 residues: Argininosuccinate lyase (473 aa).

This sequence belongs to the lyase 1 family. Argininosuccinate lyase subfamily.

The protein localises to the cytoplasm. It carries out the reaction 2-(N(omega)-L-arginino)succinate = fumarate + L-arginine. The protein operates within amino-acid biosynthesis; L-arginine biosynthesis; L-arginine from L-ornithine and carbamoyl phosphate: step 3/3. The chain is Argininosuccinate lyase from Streptomyces clavuligerus.